A 3075-amino-acid chain; its full sequence is Probable polyketide synthase 30 (3075 aa).

The Ketosynthase family 3 (KS3) domain occupies 26–458; the sequence is SGDVAVIGIG…GSNVCLILSE (433 aa). Catalysis depends on for beta-ketoacyl synthase activity residues Cys-198, His-337, and His-381. Positions 663 to 696 are acyl/malonyl transferase; sequence GVSADIIIGHSLGEVSSPYCSGMIDFQTLCYLTY. The active-site For acyl/malonyl transferase activity is the Ser-673. Residues 963–1085 are N-terminal hotdog fold; it reads GPSINNLGNN…GNFSLTKHNS (123 aa). The PKS/mFAS DH domain occupies 963–1269; sequence GPSINNLGNN…CALVSLGSNP (307 aa). The active-site Proton acceptor; for dehydratase activity is the His-997. The C-terminal hotdog fold stretch occupies residues 1102 to 1269; it reads NFTSMSKQDF…CALVSLGSNP (168 aa). The active-site Proton donor; for dehydratase activity is Asp-1174. A Carrier domain is found at 2533–2610; sequence DNNEIIRSTI…QSIEIIKSAH (78 aa). An O-(pantetheine 4'-phosphoryl)serine modification is found at Ser-2570.

Pantetheine 4'-phosphate serves as cofactor.

Functionally, probable polyketide synthase. May be involved in the process of cell migration. The sequence is that of Probable polyketide synthase 30 (pks30) from Dictyostelium discoideum (Social amoeba).